The primary structure comprises 274 residues: Large ribosomal subunit protein uL2 (274 aa).

The tract at residues 223–264 (VAMNPVDHPHGGGEGRTSGGRHPVSPWGVPTKGYKTRSNKRT) is disordered.

It belongs to the universal ribosomal protein uL2 family. Part of the 50S ribosomal subunit. Forms a bridge to the 30S subunit in the 70S ribosome.

Functionally, one of the primary rRNA binding proteins. Required for association of the 30S and 50S subunits to form the 70S ribosome, for tRNA binding and peptide bond formation. It has been suggested to have peptidyltransferase activity; this is somewhat controversial. Makes several contacts with the 16S rRNA in the 70S ribosome. This is Large ribosomal subunit protein uL2 from Shewanella denitrificans (strain OS217 / ATCC BAA-1090 / DSM 15013).